A 97-amino-acid chain; its full sequence is Integration host factor subunit alpha (97 aa).

The protein belongs to the bacterial histone-like protein family. As to quaternary structure, heterodimer of an alpha and a beta chain.

This protein is one of the two subunits of integration host factor, a specific DNA-binding protein that functions in genetic recombination as well as in transcriptional and translational control. The protein is Integration host factor subunit alpha of Histophilus somni (strain 2336) (Haemophilus somnus).